A 271-amino-acid polypeptide reads, in one-letter code: Phosphate import ATP-binding protein PstB (271 aa).

Positions 13–266 constitute an ABC transporter domain; that stretch reads VRTAPVSEAE…PKHPYTEAYI (254 aa). 57 to 64 serves as a coordination point for ATP; sequence GPSGCGKS.

Belongs to the ABC transporter superfamily. Phosphate importer (TC 3.A.1.7) family. In terms of assembly, the complex is composed of two ATP-binding proteins (PstB), two transmembrane proteins (PstC and PstA) and a solute-binding protein (PstS).

It localises to the cell inner membrane. It carries out the reaction phosphate(out) + ATP + H2O = ADP + 2 phosphate(in) + H(+). In terms of biological role, part of the ABC transporter complex PstSACB involved in phosphate import. Responsible for energy coupling to the transport system. The polypeptide is Phosphate import ATP-binding protein PstB (Thermus thermophilus (strain ATCC 27634 / DSM 579 / HB8)).